The primary structure comprises 30 residues: Bowman-Birk type proteinase inhibitor 4 (30 aa).

Intrachain disulfides connect C9-C24 and C14-C22.

Its function is as follows. Inhibits trypsin (IC(50)=17.60 nM) and, to a lesser extent, alpha-chymotrypsin (IC(50)=2.38 uM). The protein is Bowman-Birk type proteinase inhibitor 4 of Lathyrus sativus (White vetchling).